The primary structure comprises 306 residues: UDP-3-O-acyl-N-acetylglucosamine deacetylase (306 aa).

The Zn(2+) site is built by His79, His238, and Asp242. Residue His265 is the Proton donor of the active site.

It belongs to the LpxC family. Requires Zn(2+) as cofactor.

It catalyses the reaction a UDP-3-O-[(3R)-3-hydroxyacyl]-N-acetyl-alpha-D-glucosamine + H2O = a UDP-3-O-[(3R)-3-hydroxyacyl]-alpha-D-glucosamine + acetate. It functions in the pathway glycolipid biosynthesis; lipid IV(A) biosynthesis; lipid IV(A) from (3R)-3-hydroxytetradecanoyl-[acyl-carrier-protein] and UDP-N-acetyl-alpha-D-glucosamine: step 2/6. Functionally, catalyzes the hydrolysis of UDP-3-O-myristoyl-N-acetylglucosamine to form UDP-3-O-myristoylglucosamine and acetate, the committed step in lipid A biosynthesis. The sequence is that of UDP-3-O-acyl-N-acetylglucosamine deacetylase from Shewanella oneidensis (strain ATCC 700550 / JCM 31522 / CIP 106686 / LMG 19005 / NCIMB 14063 / MR-1).